The following is a 464-amino-acid chain: tRNA modification GTPase MnmE (464 aa).

Positions 25, 87, and 130 each coordinate (6S)-5-formyl-5,6,7,8-tetrahydrofolate. The TrmE-type G domain maps to 226–386 (GLSVVLAGQP…LRAELLRIAG (161 aa)). Position 236 (Asn236) interacts with K(+). Residues 236-241 (NVGKSS), 255-261 (TPIAGTT), and 280-283 (DTAG) each bind GTP. Ser240 is a binding site for Mg(2+). 3 residues coordinate K(+): Thr255, Ile257, and Thr260. Thr261 lines the Mg(2+) pocket. Lys464 contributes to the (6S)-5-formyl-5,6,7,8-tetrahydrofolate binding site.

The protein belongs to the TRAFAC class TrmE-Era-EngA-EngB-Septin-like GTPase superfamily. TrmE GTPase family. In terms of assembly, homodimer. Heterotetramer of two MnmE and two MnmG subunits. Requires K(+) as cofactor.

The protein resides in the cytoplasm. Functionally, exhibits a very high intrinsic GTPase hydrolysis rate. Involved in the addition of a carboxymethylaminomethyl (cmnm) group at the wobble position (U34) of certain tRNAs, forming tRNA-cmnm(5)s(2)U34. The sequence is that of tRNA modification GTPase MnmE from Burkholderia lata (strain ATCC 17760 / DSM 23089 / LMG 22485 / NCIMB 9086 / R18194 / 383).